The sequence spans 398 residues: Argininosuccinate synthase (398 aa).

9–17 (AYSGGLDTS) is a binding site for ATP. Tyrosine 85 lines the L-citrulline pocket. An ATP-binding site is contributed by glycine 115. Positions 117, 121, and 122 each coordinate L-aspartate. Asparagine 121 contacts L-citrulline. Residues arginine 125, serine 173, glutamate 258, and tyrosine 270 each contribute to the L-citrulline site.

Belongs to the argininosuccinate synthase family. Type 1 subfamily. In terms of assembly, homotetramer.

It localises to the cytoplasm. It catalyses the reaction L-citrulline + L-aspartate + ATP = 2-(N(omega)-L-arginino)succinate + AMP + diphosphate + H(+). It participates in amino-acid biosynthesis; L-arginine biosynthesis; L-arginine from L-ornithine and carbamoyl phosphate: step 2/3. In Streptococcus pneumoniae (strain ATCC BAA-255 / R6), this protein is Argininosuccinate synthase.